The sequence spans 134 residues: Large-conductance mechanosensitive channel (134 aa).

2 helical membrane-spanning segments follow: residues 16–36 (VVDMAVGIIIGVAFGKIVSSF) and 76–96 (GVFLQAIFDFIIIAFAIFIAV).

This sequence belongs to the MscL family. As to quaternary structure, homopentamer.

The protein localises to the cell inner membrane. Its function is as follows. Channel that opens in response to stretch forces in the membrane lipid bilayer. May participate in the regulation of osmotic pressure changes within the cell. This chain is Large-conductance mechanosensitive channel, found in Thioalkalivibrio sulfidiphilus (strain HL-EbGR7).